A 196-amino-acid polypeptide reads, in one-letter code: Probable GTP-binding protein EngB (196 aa).

The EngB-type G domain maps to 22–194 (DKKEIAFAGR…LKTIGEILGD (173 aa)). Residues 30-37 (GRSNVGKS), 56-60 (GKTRS), 74-77 (DLPG), 141-144 (TKSD), and 173-175 (FSS) each bind GTP. Residues Ser37 and Thr58 each coordinate Mg(2+).

It belongs to the TRAFAC class TrmE-Era-EngA-EngB-Septin-like GTPase superfamily. EngB GTPase family. The cofactor is Mg(2+).

Its function is as follows. Necessary for normal cell division and for the maintenance of normal septation. This is Probable GTP-binding protein EngB from Petrotoga mobilis (strain DSM 10674 / SJ95).